The sequence spans 154 residues: Fluoride-specific ion channel FluC 1 (154 aa).

4 helical membrane-spanning segments follow: residues 28–48, 59–79, 91–111, and 124–144; these read VVAV…AASL, WTTF…MVVI, PFFG…AVDS, and LAYL…AAWA. Residues glycine 99 and threonine 102 each coordinate Na(+).

Belongs to the fluoride channel Fluc/FEX (TC 1.A.43) family.

It is found in the cell membrane. It carries out the reaction fluoride(in) = fluoride(out). Na(+) is not transported, but it plays an essential structural role and its presence is essential for fluoride channel function. In terms of biological role, fluoride-specific ion channel. Important for reducing fluoride concentration in the cell, thus reducing its toxicity. This Streptomyces coelicolor (strain ATCC BAA-471 / A3(2) / M145) protein is Fluoride-specific ion channel FluC 1.